Consider the following 216-residue polypeptide: Cytidylate kinase (216 aa).

7 to 15 (GPSGTGKST) provides a ligand contact to ATP.

Belongs to the cytidylate kinase family. Type 1 subfamily.

It localises to the cytoplasm. It carries out the reaction CMP + ATP = CDP + ADP. It catalyses the reaction dCMP + ATP = dCDP + ADP. In Chlamydia trachomatis serovar A (strain ATCC VR-571B / DSM 19440 / HAR-13), this protein is Cytidylate kinase.